The sequence spans 502 residues: MAFPIPARQLFIDGEWREPLLKNRIPIINPSTEEIIGDIPAATAEDVEVAVVAARKAFKRNKGRDWAALWSHRAKYLRAIAAKITEKKDHFVKLETLDSGKPRDEAVLDIDDVATCFEYFEYFAGQAEALDAKQKAPVTLPMERFKSHVLRQPIGVVGLISPWNYPLLMDTWKIAPALAAGCTTVLKPSELASVTCLEFGEVCNEVGLPPGVLNILTGLGPDAGAPIVSHPDIDKVAFTGSSATGSKIMASAAQLVKPVTLELGGKSPVIMFEDIDIETAVEWTLFGVFWTNGQICSATSRLLVHESIAAEFVDRMVKWTKNIKISDPFEEGCRLGPVISKGQYDKIMKFISTAKSEGATILCGGSRPEHLKKGYYIEPTIITDITTSMQIWKEEVFGPVICVKTFKTEDEAIELANDTEYGLAGAVFSKDLERCERVTKALEVGAVWVNCSQPCFVHAPWGGVKRSGFGRELGEWGIENYLNIKQVTSDISDEPWGWYKSP.

The N-terminal 7 residues, 1–7, are a transit peptide targeting the chloroplast; the sequence is MAFPIPA. An NAD(+)-binding site is contributed by 240–245; it reads GSSATG. Glu262 functions as the Proton acceptor in the catalytic mechanism. The active-site Nucleophile is the Cys296.

Belongs to the aldehyde dehydrogenase family. In terms of assembly, homodimer.

The protein resides in the plastid. The protein localises to the chloroplast. The catalysed reaction is betaine aldehyde + NAD(+) + H2O = glycine betaine + NADH + 2 H(+). The protein operates within amine and polyamine biosynthesis; betaine biosynthesis via choline pathway; betaine from betaine aldehyde: step 1/1. This Atriplex hortensis (Mountain spinach) protein is Betaine aldehyde dehydrogenase, chloroplastic.